Here is a 385-residue protein sequence, read N- to C-terminus: Cotranscriptional regulator ARB2A homolog (385 aa).

Disordered stretches follow at residues 1–65 (MSDI…NGEE) and 220–239 (EEQK…NGKL). A compositionally biased stretch (low complexity) spans 52–62 (NNNNNNSNNSN). Residues 220 to 238 (EEQKEKAKEEEEKKDDNGK) are compositionally biased toward basic and acidic residues.

This sequence belongs to the ARB2A family.

The sequence is that of Cotranscriptional regulator ARB2A homolog from Dictyostelium discoideum (Social amoeba).